The chain runs to 498 residues: ATP synthase subunit beta, chloroplastic (498 aa).

172–179 (GGAGVGKT) contacts ATP.

Belongs to the ATPase alpha/beta chains family. As to quaternary structure, F-type ATPases have 2 components, CF(1) - the catalytic core - and CF(0) - the membrane proton channel. CF(1) has five subunits: alpha(3), beta(3), gamma(1), delta(1), epsilon(1). CF(0) has four main subunits: a(1), b(1), b'(1) and c(9-12).

The protein localises to the plastid. The protein resides in the chloroplast thylakoid membrane. The enzyme catalyses ATP + H2O + 4 H(+)(in) = ADP + phosphate + 5 H(+)(out). Produces ATP from ADP in the presence of a proton gradient across the membrane. The catalytic sites are hosted primarily by the beta subunits. The protein is ATP synthase subunit beta, chloroplastic of Beta vulgaris (Sugar beet).